The primary structure comprises 399 residues: tRNA-specific 2-thiouridylase MnmA (399 aa).

ATP-binding positions include 7–14 and methionine 33; that span reads AMSGGVDS. Cysteine 128 functions as the Nucleophile in the catalytic mechanism. Residues cysteine 128 and cysteine 224 are joined by a disulfide bond. ATP is bound at residue glycine 152. The segment at 174–176 is interaction with tRNA; sequence KDQ. Cysteine 224 acts as the Cysteine persulfide intermediate in catalysis. The segment at 333 to 334 is interaction with tRNA; the sequence is RY.

Belongs to the MnmA/TRMU family.

The protein localises to the cytoplasm. The catalysed reaction is S-sulfanyl-L-cysteinyl-[protein] + uridine(34) in tRNA + AH2 + ATP = 2-thiouridine(34) in tRNA + L-cysteinyl-[protein] + A + AMP + diphosphate + H(+). Catalyzes the 2-thiolation of uridine at the wobble position (U34) of tRNA, leading to the formation of s(2)U34. This Rhodopirellula baltica (strain DSM 10527 / NCIMB 13988 / SH1) protein is tRNA-specific 2-thiouridylase MnmA.